The primary structure comprises 580 residues: uncharacterized protein (580 aa).

Disordered regions lie at residues 161–241 (SFSP…SVND), 256–281 (LGSLSTNTSSTAQKNKSRKPTKSFSD), 325–345 (NVSHEEKSHSVQDDKSKQLLK), 472–495 (PRDTDIKATPNLSQSGNINSDNSD), and 544–564 (SAVLRRQSSQSSGANDDKEVR). Over residues 192-203 (SNSNSSDTSTDD) the composition is skewed to low complexity. 2 stretches are compositionally biased toward polar residues: residues 223-241 (THSSAPPLNQQKSSTSVND) and 256-269 (LGSLSTNTSSTAQK). A compositionally biased stretch (basic and acidic residues) spans 326–341 (VSHEEKSHSVQDDKSK). A compositionally biased stretch (polar residues) spans 481–495 (PNLSQSGNINSDNSD).

This is an uncharacterized protein from Schizosaccharomyces pombe (strain 972 / ATCC 24843) (Fission yeast).